A 273-amino-acid polypeptide reads, in one-letter code: Giardin subunit beta (273 aa).

Residues 1–19 are nonhelical region; sequence MSMFTSTRTLTQTMDKPDD. The rod stretch occupies residues 20–273; it reads LTRSATETAV…GGLSMVTKHQ (254 aa). Coiled coils occupy residues 123–175 and 211–263; these read DTLN…YDQL and NTKL…SKIQ.

It belongs to the SF-assemblin family. As to quaternary structure, interacts with BOP1 (via C-terminal WD repeats).

The protein localises to the cytoplasm. Its subcellular location is the cytoskeleton. Giardins are involved in parasite attachment to the intestinal mucosa and in the cytoskeletal disassembly and reassembly that marks the transition from infectious trophozoite to transmissible cyst. They may interact with other cytoskeletal proteins such as microtubules in the microribbons or crossbridges, to maintain the integrity of the ventral disk. The chain is Giardin subunit beta from Giardia intestinalis (Giardia lamblia).